The chain runs to 206 residues: Guanylate kinase (206 aa).

The 179-residue stretch at 5–183 folds into the Guanylate kinase-like domain; sequence FNLLILSGPS…SKEIILSIAK (179 aa). 12 to 19 lines the ATP pocket; sequence GPSGAGKS.

This sequence belongs to the guanylate kinase family.

Its subcellular location is the cytoplasm. The enzyme catalyses GMP + ATP = GDP + ADP. Essential for recycling GMP and indirectly, cGMP. This is Guanylate kinase from Helicobacter pylori (strain HPAG1).